Reading from the N-terminus, the 458-residue chain is MSLRIYNTLSRALEEFSPIEPGHVRMYVCGMTVYDLCHLGHARSMIAFDVVQRWLRASGLAVTYVRNITDIDDKIIKRAVENGETIRSLTDRMIDALHQDADALGIERPTHEPRATAYVPQMLDMIGTLQGKGLAYQAGNGDVNYAVRKFPGYGKLSGKSLDELNAGERVAVQDGKHDPLDFVLWKSAKPEEPADVKWRSPFGEGRPGWHIECSAMGCALLGESFDIHGGGADLQFPHHENEIAQSEGATGKPFARLWMHNGFINVDNEKMSKSLGNFFTIRDVLKEYDAETVRFFVVRSHYRSPLNYSNVHLDDARAALKRLYTALSLVAPAPVEVDWAEGYAARFKAAMDEDFGTPEAVAVLFDLAGEVNRSKSPAAAGLLKALGRHLGLLQADPQDFLKAGAGLDEAAIQAQIAARAAAKAAKNFAEADRIRNDLLAQGIVLKDSATGTTWEAAQ.

Cysteine 29 contributes to the Zn(2+) binding site. Residues 31 to 41 (MTVYDLCHLGH) carry the 'HIGH' region motif. Zn(2+) contacts are provided by cysteine 213, histidine 238, and glutamate 242. The 'KMSKS' region signature appears at 270–274 (KMSKS). Lysine 273 lines the ATP pocket.

This sequence belongs to the class-I aminoacyl-tRNA synthetase family. As to quaternary structure, monomer. Requires Zn(2+) as cofactor.

The protein localises to the cytoplasm. The enzyme catalyses tRNA(Cys) + L-cysteine + ATP = L-cysteinyl-tRNA(Cys) + AMP + diphosphate. This is Cysteine--tRNA ligase from Acidovorax ebreus (strain TPSY) (Diaphorobacter sp. (strain TPSY)).